The primary structure comprises 213 residues: Protein nullo (213 aa).

Blastoderm. Throughout the entire cortex of the embryo although the distribution is not uniform.

Its function is as follows. Actin-myosin network stability during cellularization. Might be involved in increasing actin-actin interactions or membrane-to-cytoskeleton attachments. nullo together with Sry-a and bnk may provide auxiliary functions, by acting both to stabilize a large and dynamic microfilament structure and regulate its functions. This is Protein nullo (nullo) from Drosophila melanogaster (Fruit fly).